Reading from the N-terminus, the 556-residue chain is Arginine--tRNA ligase (556 aa).

Positions 132–142 (ANPTGDLHLGH) match the 'HIGH' region motif.

The protein belongs to the class-I aminoacyl-tRNA synthetase family. Monomer.

It localises to the cytoplasm. It carries out the reaction tRNA(Arg) + L-arginine + ATP = L-arginyl-tRNA(Arg) + AMP + diphosphate. The polypeptide is Arginine--tRNA ligase (Shouchella clausii (strain KSM-K16) (Alkalihalobacillus clausii)).